Consider the following 520-residue polypeptide: Ribonuclease Y (520 aa).

Residues 4–24 (TVWILISILLATVGAVVGFFV) form a helical membrane-spanning segment. The segment at 86–116 (KQENRLMQKEENLDRKDETLDKREQQLEKKE) is disordered. Positions 210–273 (TVSVVNLPND…ETARIALDKL (64 aa)) constitute a KH domain. The region spanning 336 to 429 (VLKHSMEVAY…VAAADALSAA (94 aa)) is the HD domain.

The protein belongs to the RNase Y family.

The protein localises to the cell membrane. Functionally, endoribonuclease that initiates mRNA decay. The sequence is that of Ribonuclease Y from Bacillus cereus (strain ATCC 10987 / NRS 248).